A 298-amino-acid chain; its full sequence is Ethanolamine ammonia-lyase small subunit (298 aa).

The disordered stretch occupies residues 17–37; sequence MGQDVPQPVAPSKQEGAKPQC. The adenosylcob(III)alamin site is built by valine 210, glutamate 231, and cysteine 261.

Belongs to the EutC family. The basic unit is a heterodimer which dimerizes to form tetramers. The heterotetramers trimerize; 6 large subunits form a core ring with 6 small subunits projecting outwards. Adenosylcob(III)alamin is required as a cofactor.

It localises to the bacterial microcompartment. The enzyme catalyses ethanolamine = acetaldehyde + NH4(+). The protein operates within amine and polyamine degradation; ethanolamine degradation. Its function is as follows. Catalyzes the deamination of various vicinal amino-alcohols to oxo compounds. Allows this organism to utilize ethanolamine as the sole source of nitrogen and carbon in the presence of external vitamin B12. In Salmonella paratyphi A (strain ATCC 9150 / SARB42), this protein is Ethanolamine ammonia-lyase small subunit.